Reading from the N-terminus, the 1206-residue chain is DNA-directed RNA polymerase subunit beta' (1206 aa).

Zn(2+) is bound by residues Cys-60, Cys-62, Cys-75, and Cys-78. Mg(2+) is bound by residues Asp-449, Asp-451, and Asp-453. Residues Cys-822, Cys-896, Cys-903, and Cys-906 each coordinate Zn(2+).

The protein belongs to the RNA polymerase beta' chain family. As to quaternary structure, the RNAP catalytic core consists of 2 alpha, 1 beta, 1 beta' and 1 omega subunit. When a sigma factor is associated with the core the holoenzyme is formed, which can initiate transcription. Mg(2+) serves as cofactor. The cofactor is Zn(2+).

It catalyses the reaction RNA(n) + a ribonucleoside 5'-triphosphate = RNA(n+1) + diphosphate. Functionally, DNA-dependent RNA polymerase catalyzes the transcription of DNA into RNA using the four ribonucleoside triphosphates as substrates. This chain is DNA-directed RNA polymerase subunit beta', found in Staphylococcus haemolyticus (strain JCSC1435).